We begin with the raw amino-acid sequence, 149 residues long: Calmodulin (149 aa).

A2 carries the N-acetylalanine modification. 4 EF-hand domains span residues 8–43 (EQIA…LGQN), 44–79 (PTEA…KMKD), 81–116 (DSEE…LGEK), and 117–149 (LTDE…MLAK). D21, D23, D25, C27, E32, D57, D59, N61, T63, E68, D94, D96, N98, and E105 together coordinate Ca(2+). K116 is modified (N6,N6,N6-trimethyllysine). Ca(2+) contacts are provided by D130, D132, D134, Q136, and E141.

Belongs to the calmodulin family.

Calmodulin mediates the control of a large number of enzymes, ion channels and other proteins by Ca(2+). Among the enzymes to be stimulated by the calmodulin-Ca(2+) complex are a number of protein kinases and phosphatases. This is Calmodulin (CALM1) from Solanum lycopersicum (Tomato).